A 226-amino-acid polypeptide reads, in one-letter code: 2-C-methyl-D-erythritol 4-phosphate cytidylyltransferase (226 aa).

Belongs to the IspD/TarI cytidylyltransferase family. IspD subfamily.

The enzyme catalyses 2-C-methyl-D-erythritol 4-phosphate + CTP + H(+) = 4-CDP-2-C-methyl-D-erythritol + diphosphate. Its pathway is isoprenoid biosynthesis; isopentenyl diphosphate biosynthesis via DXP pathway; isopentenyl diphosphate from 1-deoxy-D-xylulose 5-phosphate: step 2/6. In terms of biological role, catalyzes the formation of 4-diphosphocytidyl-2-C-methyl-D-erythritol from CTP and 2-C-methyl-D-erythritol 4-phosphate (MEP). This is 2-C-methyl-D-erythritol 4-phosphate cytidylyltransferase from Prochlorococcus marinus (strain MIT 9312).